The following is a 521-amino-acid chain: Histone deacetylase HDAC1 (521 aa).

A histone deacetylase region spans residues 7-319 (KRVCYYYDSD…WTYETSVALA (313 aa)). H139 is a catalytic residue. The interval 376–521 (GVQIQAIPED…GAKGAKENNI (146 aa)) is disordered. Over residues 386-395 (AINDESDDED) the composition is skewed to acidic residues. At S391 the chain carries Phosphoserine. Over residues 396–414 (KVDKDDRLPQSDKDKRIVP) the composition is skewed to basic and acidic residues. A phosphoserine mark is found at S419, S421, and S455. T457 bears the Phosphothreonine mark. Positions 459–470 (SEIKDEKEKGDG) are enriched in basic and acidic residues. Positions 476–502 (STASNTNSNNNSNNKSDNDAGATANAG) are enriched in low complexity. Over residues 503-513 (SGSGSGSGAGA) the composition is skewed to gly residues.

This sequence belongs to the histone deacetylase family. HD type 1 subfamily. As to quaternary structure, component of a form of the Esc/E(z) complex present specifically during early embryogenesis which is composed of Caf1-55, esc, E(z), Su(z)12, Pcl and HDAC1. The Esc/E(z) complex may also associate with Pcl and HDAC1 during early embryogenesis. This complex is distinct from the PRC1 complex, which contains many other PcG proteins like Pc, Ph, Psc, Su(z)2. The 2 complexes however cooperate and interact together during the first 3 hours of development to establish PcG silencing. Interacts with the histone methyltransferase Su(var)3-9. Component of a complex that contains at least HDAC1, CoRest and Su(var)3-3/Hdm. Component of the DREAM complex at least composed of Myb, Caf1-55, mip40, mip120, mip130, E2f2, Dp, Rbf, Rbf2, lin-52, HDAC1 and l(3)mbt. Interacts with the chromatin-remodeler Mi-2. Interacts with Rrp6.

The protein resides in the nucleus. It catalyses the reaction N(6)-acetyl-L-lysyl-[histone] + H2O = L-lysyl-[histone] + acetate. Functionally, catalyzes the deacetylation of lysine residues on the N-terminal part of the core histones (H2A, H2B, H3 and H4). Histone deacetylation may constitute a tag for epigenetic repression and plays an important role in transcriptional regulation, cell cycle progression and developmental events. For instance, deacetylation of histone H3 may be a prerequisite for the subsequent recruitment of the histone methyltransferase Su(var)3-9 to histones. Involved in position-effect variegation (PEV). In the larval brain, part of a regulatory network including the transcriptional repressors klu, dpn and E(spl)mgamma-HLH which is required for type II neuroblast self-renewal and for maintaining erm in an inactive state in intermediate neural progenitors (INP). The protein is Histone deacetylase HDAC1 of Drosophila melanogaster (Fruit fly).